The sequence spans 143 residues: Glutaredoxin-2 (143 aa).

A mitochondrion-targeting transit peptide spans 1–30 (METNFSFDSNLIVIIIITLFATRIIAKRFL). Ser-37 bears the Phosphoserine mark. Residues 41-143 (VAHVKDLIGQ…LAEILKPVFQ (103 aa)) form the Glutaredoxin domain. 58–63 (KTYCPY) contributes to the glutathione binding site. Position 61 is an S-glutathionyl cysteine; alternate (Cys-61). An intrachain disulfide couples Cys-61 to Cys-64. Ser-91 bears the Phosphoserine mark. Residues Val-109 and 122–123 (NS) contribute to the glutathione site.

The protein belongs to the glutaredoxin family.

It is found in the cytoplasm. Its subcellular location is the mitochondrion. It catalyses the reaction 2 glutathione + H2O2 = glutathione disulfide + 2 H2O. The enzyme catalyses 1-chloro-2,4-dinitrobenzene + glutathione = 2,4-dinitrophenyl-S-glutathione + chloride + H(+). The catalysed reaction is RX + glutathione = an S-substituted glutathione + a halide anion + H(+). In terms of biological role, component of the glutathione system which performs several activities such as glutathione-dependent oxidoreductase, glutathione peroxidase and glutathione S-transferase (GST) activity. The disulfide bond functions as an electron carrier in the glutathione-dependent synthesis of deoxyribonucleotides by the enzyme ribonucleotide reductase. In addition, it is also involved in reducing cytosolic protein- and non-protein-disulfides in a coupled system with glutathione reductase. Required for resistance to reactive oxygen species (ROS) by directly reducing hydroperoxides and for the detoxification of ROS-mediated damage. GRX2 is more active as an oxidoreductase than GRX1. Responsible for the S-glutathionylation of DHBP synthase. This chain is Glutaredoxin-2 (GRX2), found in Saccharomyces cerevisiae (strain ATCC 204508 / S288c) (Baker's yeast).